The chain runs to 272 residues: MSSSTLFHLFLLSSLLFSCLSNARPDEDDFSYIEGSPNGPENWGNLNPEWKTCGNGMEQSPINLCDDRVIQTPALGKLRTSYQAARATLKNNGHDIMVNFKSDAGSQFINQVRYQLKRIHFHSPSEHVLNGERFDLEVQMVHESQDQRRAVTAILFRFGRSDPFLSDLEDFISQISKSEKNEVDAGVVDPRQLLQFDDPAYYRYMGSFTAPPCTEDITWTVIKKLGTVSPRQVLMLKQAVNENAINNARPLQPLKFRTIFFYPRQKSNHDAI.

An N-terminal signal peptide occupies residues 1-25 (MSSSTLFHLFLLSSLLFSCLSNARP). The Alpha-carbonic anhydrase domain maps to 28-263 (DDFSYIEGSP…LKFRTIFFYP (236 aa)). Cys53 and Cys213 are oxidised to a cystine.

Belongs to the alpha-class carbonic anhydrase family. Homodimer; disulfide-linked. Post-translationally, not glycosylated. As to expression, expressed in tuber (at protein level).

Its activity is regulated as follows. Loss of hemagglutinating activity by EDTA treatment. The activity is fully recovered by the addition of 5 mM Ca(2+) ions, but not with Mg(2+) and Mn 2(+). Hemagglutination activity is inhibited by maltose and its derivatives, with maltopentaose and maltohexaose being the best inhibitors followed by maltose and iso maltose. Not inhibited by glycoproteins. Its function is as follows. Maltose-binding lectin. No affinity is detected toward glucose. Has hemagglutinating activity against rabbit erythrocytes at 3.9 ug/ml. No carbonate dehydratase or trypsin inhibitor activity detected by measuring the hydrolysis of 4-nitrophenyl acetate or the inhibition of bovine trypsin-catalyzed hydrolysis of N-benzoyl-L-arginine ethyl ester, respectively. This Dioscorea polystachya (Chinese yam) protein is Dioscorin DB3L.